We begin with the raw amino-acid sequence, 259 residues long: Ribonuclease PH (259 aa).

Phosphate contacts are provided by residues arginine 88 and 126-128 (GTR).

The protein belongs to the RNase PH family. As to quaternary structure, homohexameric ring arranged as a trimer of dimers.

The enzyme catalyses tRNA(n+1) + phosphate = tRNA(n) + a ribonucleoside 5'-diphosphate. Its function is as follows. Phosphorolytic 3'-5' exoribonuclease that plays an important role in tRNA 3'-end maturation. Removes nucleotide residues following the 3'-CCA terminus of tRNAs; can also add nucleotides to the ends of RNA molecules by using nucleoside diphosphates as substrates, but this may not be physiologically important. Probably plays a role in initiation of 16S rRNA degradation (leading to ribosome degradation) during starvation. The sequence is that of Ribonuclease PH from Mycolicibacterium paratuberculosis (strain ATCC BAA-968 / K-10) (Mycobacterium paratuberculosis).